The following is a 513-amino-acid chain: Serine/threonine-protein phosphatase T (513 aa).

3 TPR repeats span residues 12-45, 46-79, and 80-113; these read ALER…DSTQ, SIYF…DPKN, and IKAY…KPND. Residues 188 to 513 form a catalytic region; sequence KNMSQEFISK…MAYSNGGFGL (326 aa). Mn(2+) contacts are provided by Asp-249, His-251, Asp-278, and Asn-310. Catalysis depends on His-311, which acts as the Proton donor/acceptor. Residues His-359 and His-434 each coordinate Mn(2+).

This sequence belongs to the PPP phosphatase family. PP-5 (PP-T) subfamily. In terms of assembly, interacts (via TPR repeats) with HSP82 (via C-terminal MEEVD pentapeptide). The cofactor is Mg(2+). Requires Mn(2+) as cofactor.

The protein localises to the nucleus. The catalysed reaction is O-phospho-L-seryl-[protein] + H2O = L-seryl-[protein] + phosphate. The enzyme catalyses O-phospho-L-threonyl-[protein] + H2O = L-threonyl-[protein] + phosphate. Stimulated by arachidonic acid and other unsaturated fatty acids, and by arachidoyl coenzyme A. Functionally, protein phosphatase that specifically binds to and dephosphorylates the molecular chaperone Hsp90 (HSC82 and HSP82). Dephosphorylation positively regulates the Hsp90 chaperone machinery. The polypeptide is Serine/threonine-protein phosphatase T (PPT1) (Saccharomyces cerevisiae (strain ATCC 204508 / S288c) (Baker's yeast)).